The chain runs to 494 residues: Glutamate decarboxylase 2 (494 aa).

N6-(pyridoxal phosphate)lysine is present on K276. The calmodulin-binding stretch occupies residues 463–494 (VKEKKMEKEILMEVIVGWRKFVKERKKMNGVC).

This sequence belongs to the group II decarboxylase family. Homohexamer. Interacts with calmodulin. It depends on pyridoxal 5'-phosphate as a cofactor. As to expression, expressed in roots, inflorescence stems, flowers, siliques and leaves.

The enzyme catalyses L-glutamate + H(+) = 4-aminobutanoate + CO2. With respect to regulation, up-regulated by calmodulin binding at physiological pH. Its function is as follows. Catalyzes the conversion of glutamate to 4-aminobutanoate (GABA). The calmodulin-binding is calcium-dependent and it is proposed to directly or indirectly form a calcium regulated control of GABA biosynthesis. In Arabidopsis thaliana (Mouse-ear cress), this protein is Glutamate decarboxylase 2 (GAD2).